The following is a 561-amino-acid chain: DNA ligase B (561 aa).

Catalysis depends on Lys-125, which acts as the N6-AMP-lysine intermediate.

It belongs to the NAD-dependent DNA ligase family. LigB subfamily.

It catalyses the reaction NAD(+) + (deoxyribonucleotide)n-3'-hydroxyl + 5'-phospho-(deoxyribonucleotide)m = (deoxyribonucleotide)n+m + AMP + beta-nicotinamide D-nucleotide.. In terms of biological role, catalyzes the formation of phosphodiester linkages between 5'-phosphoryl and 3'-hydroxyl groups in double-stranded DNA using NAD as a coenzyme and as the energy source for the reaction. This Salmonella arizonae (strain ATCC BAA-731 / CDC346-86 / RSK2980) protein is DNA ligase B.